The primary structure comprises 264 residues: Acyl-[acyl-carrier-protein]--UDP-N-acetylglucosamine O-acyltransferase (264 aa).

Belongs to the transferase hexapeptide repeat family. LpxA subfamily. Homotrimer.

It is found in the cytoplasm. The catalysed reaction is a (3R)-hydroxyacyl-[ACP] + UDP-N-acetyl-alpha-D-glucosamine = a UDP-3-O-[(3R)-3-hydroxyacyl]-N-acetyl-alpha-D-glucosamine + holo-[ACP]. It functions in the pathway glycolipid biosynthesis; lipid IV(A) biosynthesis; lipid IV(A) from (3R)-3-hydroxytetradecanoyl-[acyl-carrier-protein] and UDP-N-acetyl-alpha-D-glucosamine: step 1/6. In terms of biological role, involved in the biosynthesis of lipid A, a phosphorylated glycolipid that anchors the lipopolysaccharide to the outer membrane of the cell. In Rickettsia conorii (strain ATCC VR-613 / Malish 7), this protein is Acyl-[acyl-carrier-protein]--UDP-N-acetylglucosamine O-acyltransferase.